We begin with the raw amino-acid sequence, 107 residues long: Flagellar hook-basal body complex protein FliE (107 aa).

The protein belongs to the FliE family.

Its subcellular location is the bacterial flagellum basal body. The sequence is that of Flagellar hook-basal body complex protein FliE from Sodalis glossinidius (strain morsitans).